The chain runs to 546 residues: Membrane protein insertase YidC (546 aa).

Residues 8 to 28 (ILLATVLSVGILILWQVIFPT) form a helical membrane-spanning segment. The segment at 31-70 (APPKPAHPPAAEVAKPAAPASPAPGAAAPAVPAPPPDAPE) is disordered. A compositionally biased stretch (low complexity) spans 39–60 (PAAEVAKPAAPASPAPGAAAPA). The next 5 helical transmembrane spans lie at 326–346 (IDYG…LYVM), 356–376 (WGVA…PLTY), 422–442 (LGGC…YAAL), 459–479 (LTAH…SFVM), and 498–518 (FFPG…TLYI).

This sequence belongs to the OXA1/ALB3/YidC family. Type 1 subfamily. In terms of assembly, interacts with the Sec translocase complex via SecD. Specifically interacts with transmembrane segments of nascent integral membrane proteins during membrane integration.

It localises to the cell inner membrane. In terms of biological role, required for the insertion and/or proper folding and/or complex formation of integral membrane proteins into the membrane. Involved in integration of membrane proteins that insert both dependently and independently of the Sec translocase complex, as well as at least some lipoproteins. Aids folding of multispanning membrane proteins. The polypeptide is Membrane protein insertase YidC (Anaeromyxobacter dehalogenans (strain 2CP-1 / ATCC BAA-258)).